The chain runs to 389 residues: Type II methyltransferase M1.ScrFI (389 aa).

One can recognise an HTH cro/C1-type domain in the interval 16–71 (IKEKRLRLNMTQKELADAVGMSKNGDRTIRRWENGETCPSQLEISAILRFPEIAPF). An SAM-dependent MTase C5-type domain is found at 79-387 (YKMIDLFAGI…EKMLEVLEKS (309 aa)). The active site involves Cys-149.

It belongs to the class I-like SAM-binding methyltransferase superfamily. C5-methyltransferase family.

The catalysed reaction is a 2'-deoxycytidine in DNA + S-adenosyl-L-methionine = a 5-methyl-2'-deoxycytidine in DNA + S-adenosyl-L-homocysteine + H(+). Functionally, a methylase, recognizes the double-stranded sequence 5'-CCNGG-3', methylates C-2 on both strands, and protects the DNA from cleavage by the ScrFI endonuclease. This chain is Type II methyltransferase M1.ScrFI (scrFIAM), found in Lactococcus lactis subsp. cremoris (Streptococcus cremoris).